A 144-amino-acid polypeptide reads, in one-letter code: Universal stress protein F (144 aa).

The protein belongs to the universal stress protein A family. In terms of assembly, homodimer.

This is Universal stress protein F (uspF) from Escherichia coli O157:H7.